The sequence spans 155 residues: 3-hydroxyacyl-[acyl-carrier-protein] dehydratase FabZ (155 aa).

Residue histidine 58 is part of the active site.

The protein belongs to the thioester dehydratase family. FabZ subfamily.

Its subcellular location is the cytoplasm. The enzyme catalyses a (3R)-hydroxyacyl-[ACP] = a (2E)-enoyl-[ACP] + H2O. Functionally, involved in unsaturated fatty acids biosynthesis. Catalyzes the dehydration of short chain beta-hydroxyacyl-ACPs and long chain saturated and unsaturated beta-hydroxyacyl-ACPs. The chain is 3-hydroxyacyl-[acyl-carrier-protein] dehydratase FabZ from Alkalilimnicola ehrlichii (strain ATCC BAA-1101 / DSM 17681 / MLHE-1).